The chain runs to 309 residues: Cytochrome c1, heme protein, mitochondrial (309 aa).

The N-terminal 61 residues, 1-61 (MFSNLSKRWA…LYADSLTAEA (61 aa)), are a transit peptide targeting the mitochondrion. The Mitochondrial intermembrane portion of the chain corresponds to 62 to 262 (MTAAEHGLHA…TFLNWCAEPE (201 aa)). The Cytochrome c domain occupies 88–241 (ASIRRGYQVY…DMVEYEDGTP (154 aa)). Heme c contacts are provided by Cys-101, Cys-104, and His-105. The segment covering 131-140 (EFEYDDEPDE) has biased composition (acidic residues). The disordered stretch occupies residues 131 to 168 (EFEYDDEPDEQGNPKKRPGKLSDYIPGPYPNEQAARAA). Met-225 is a heme c binding site. The helical transmembrane segment at 263 to 296 (HDERKRLGLKTVIILSSLYLLSIWVKKFKWAGIK) threads the bilayer. Over 297–309 (TRKFVFNPPKPRK) the chain is Mitochondrial matrix.

Belongs to the cytochrome c family. As to quaternary structure, component of the ubiquinol-cytochrome c oxidoreductase (cytochrome b-c1 complex, complex III, CIII), a multisubunit enzyme composed of 10 subunits. The complex is composed of 3 respiratory subunits cytochrome b (COB), cytochrome c1 (CYT1) and Rieske protein (RIP1), 2 core protein subunits COR1 and QCR2, and 5 low-molecular weight protein subunits QCR6, QCR7, QCR8, QCR9 and QCR10. The complex exists as an obligatory dimer and forms supercomplexes (SCs) in the inner mitochondrial membrane with a monomer or a dimer of cytochrome c oxidase (complex IV, CIV), resulting in 2 different assemblies (supercomplexes III(2)IV and III(2)IV(2)). CYT1 interacts with COX5A at the CIII-CIV interface. It depends on heme c as a cofactor.

The protein localises to the mitochondrion inner membrane. It catalyses the reaction a quinol + 2 Fe(III)-[cytochrome c](out) = a quinone + 2 Fe(II)-[cytochrome c](out) + 2 H(+)(out). In terms of biological role, component of the ubiquinol-cytochrome c oxidoreductase, a multisubunit transmembrane complex that is part of the mitochondrial electron transport chain which drives oxidative phosphorylation. The respiratory chain contains 3 multisubunit complexes succinate dehydrogenase (complex II, CII), ubiquinol-cytochrome c oxidoreductase (cytochrome b-c1 complex, complex III, CIII) and cytochrome c oxidase (complex IV, CIV), that cooperate to transfer electrons derived from NADH and succinate to molecular oxygen, creating an electrochemical gradient over the inner membrane that drives transmembrane transport and the ATP synthase. The cytochrome b-c1 complex catalyzes electron transfer from ubiquinol to cytochrome c, linking this redox reaction to translocation of protons across the mitochondrial inner membrane, with protons being carried across the membrane as hydrogens on the quinol. In the process called Q cycle, 2 protons are consumed from the matrix, 4 protons are released into the intermembrane space and 2 electrons are passed to cytochrome c. Cytochrome c1 is a catalytic core subunit containing a c-type heme. It transfers electrons from the [2Fe-2S] iron-sulfur cluster of the Rieske protein to cytochrome c. The chain is Cytochrome c1, heme protein, mitochondrial (CYT1) from Saccharomyces cerevisiae (strain ATCC 204508 / S288c) (Baker's yeast).